The following is a 177-amino-acid chain: ATP-dependent protease subunit HslV (177 aa).

Residue Thr7 is part of the active site. Residues Ala162, Cys165, and Thr168 each coordinate Na(+).

The protein belongs to the peptidase T1B family. HslV subfamily. In terms of assembly, a double ring-shaped homohexamer of HslV is capped on each side by a ring-shaped HslU homohexamer. The assembly of the HslU/HslV complex is dependent on binding of ATP.

The protein localises to the cytoplasm. It carries out the reaction ATP-dependent cleavage of peptide bonds with broad specificity.. With respect to regulation, allosterically activated by HslU binding. Protease subunit of a proteasome-like degradation complex believed to be a general protein degrading machinery. The chain is ATP-dependent protease subunit HslV from Leptospira biflexa serovar Patoc (strain Patoc 1 / Ames).